A 201-amino-acid chain; its full sequence is MANHFSQLAKKSKTNGNSEKIAKEQTGKPSLEIYKLGDDVLRQNSKRITKVDESIRKLTREMIQSMYAAKGIGLAAPQIGINKELLVIDVNFEDSAAEPLILINPEITDYGTTLNSYEEGCLSIPGVYLNVVRPSTIKLKFRDEMGRPRKMKADGLLARCIQHEMDHLNGILFVDRVTSKDDLKKELIKEGFHEKDVISIT.

The tract at residues 1-24 is disordered; the sequence is MANHFSQLAKKSKTNGNSEKIAKE. Fe cation is bound by residues Cys121 and His163. The active site involves Glu164. His167 contributes to the Fe cation binding site.

Belongs to the polypeptide deformylase family. It depends on Fe(2+) as a cofactor.

The enzyme catalyses N-terminal N-formyl-L-methionyl-[peptide] + H2O = N-terminal L-methionyl-[peptide] + formate. Removes the formyl group from the N-terminal Met of newly synthesized proteins. Requires at least a dipeptide for an efficient rate of reaction. N-terminal L-methionine is a prerequisite for activity but the enzyme has broad specificity at other positions. This chain is Peptide deformylase, found in Prochlorococcus marinus (strain MIT 9312).